The chain runs to 1067 residues: Sal-like protein 4 (1067 aa).

Positions 1–62 are disordered; that stretch reads MSRRKQAKPQ…SEDSIPVKRP (62 aa). Residues 15–42 are compositionally biased toward low complexity; the sequence is EEGQGEQPQQLPSPDLAEALAAEEPGAP. Phosphoserine is present on S53. A C2H2-type 1; atypical zinc finger spans residues 68–90; the sequence is HICNKCCAEFFSLSEFMEHKKSC. The segment at 115-140 is disordered; that stretch reads ALSHQLGSPSNKDSLQENGSSSGDLK. Polar residues predominate over residues 119 to 137; the sequence is QLGSPSNKDSLQENGSSSG. K151 participates in a covalent cross-link: Glycyl lysine isopeptide (Lys-Gly) (interchain with G-Cter in SUMO1); alternate. Residue K151 forms a Glycyl lysine isopeptide (Lys-Gly) (interchain with G-Cter in SUMO2); alternate linkage. Residues K170, K185, and K291 each participate in a glycyl lysine isopeptide (Lys-Gly) (interchain with G-Cter in SUMO2) cross-link. S308 is subject to Phosphoserine. K317 is covalently cross-linked (Glycyl lysine isopeptide (Lys-Gly) (interchain with G-Cter in SUMO1); alternate). K317 is covalently cross-linked (Glycyl lysine isopeptide (Lys-Gly) (interchain with G-Cter in SUMO2); alternate). Residue K377 forms a Glycyl lysine isopeptide (Lys-Gly) (interchain with G-Cter in SUMO2) linkage. A Glycyl lysine isopeptide (Lys-Gly) (interchain with G-Cter in SUMO1); alternate cross-link involves residue K379. K379 is covalently cross-linked (Glycyl lysine isopeptide (Lys-Gly) (interchain with G-Cter in SUMO2); alternate). C2H2-type zinc fingers lie at residues 387 to 409 and 415 to 437; these read HKCR…LRSH and YVCP…LQRH. K441 is covalently cross-linked (Glycyl lysine isopeptide (Lys-Gly) (interchain with G-Cter in SUMO2)). A disordered region spans residues 471–521; that stretch reads DESSLSVDAEPVPVTGTPSLGLPQKLTSGPNSRDLMGGSLPNDMQPGPSPE. A Glycyl lysine isopeptide (Lys-Gly) (interchain with G-Cter in SUMO2) cross-link involves residue K557. C2H2-type zinc fingers lie at residues 573 to 595 and 601 to 623; these read NECL…YRTH and FQCK…LGVH. Glycyl lysine isopeptide (Lys-Gly) (interchain with G-Cter in SUMO2) cross-links involve residues K604 and K630. A C2H2-type 6 zinc finger spans residues 633 to 655; sequence HSCPICQKKFTNAVMLQQHIRMH. Disordered stretches follow at residues 682–716 and 752–835; these read ENGS…STVS and RQSS…SLPP. The segment covering 693–704 has biased composition (acidic residues); sequence DAAEGMEAEEVC. Composition is skewed to polar residues over residues 707-716 and 752-761; these read DVPSGPSTVS and RQSSRENSSL. 2 positions are modified to phosphoserine: S785 and S798. Over residues 798–809 the composition is skewed to polar residues; sequence SPANSQAGSVKS. Over residues 810–829 the composition is skewed to basic and acidic residues; that stretch reads RSPEGHKAEGVESCRVDTEG. A Glycyl lysine isopeptide (Lys-Gly) (interchain with G-Cter in SUMO1); alternate cross-link involves residue K846. Residue K846 forms a Glycyl lysine isopeptide (Lys-Gly) (interchain with G-Cter in SUMO2); alternate linkage. The C2H2-type 7 zinc finger occupies 880–902; that stretch reads HCCTRCGKNFSSASALQIHERTH. K906 is covalently cross-linked (Glycyl lysine isopeptide (Lys-Gly) (interchain with G-Cter in SUMO2)). Residues 908–930 form a C2H2-type 8 zinc finger; that stretch reads FVCNICGRAFTTKGNLKVHYMTH. Residues K942 and K957 each participate in a glycyl lysine isopeptide (Lys-Gly) (interchain with G-Cter in SUMO2) cross-link. A Phosphoserine modification is found at S1029.

It belongs to the sal C2H2-type zinc-finger protein family. In terms of assembly, interacts with POU5F1/OCT4. Interacts with NANOG. Interacts with BEND3. Interacts with NSD2 (via PHD-type zinc fingers 1, 2 and 3). Interacts with NRBP1. In terms of processing, sumoylation with both SUMO1 and SUMO2 regulates the stability, subcellular localization, transcriptional activity, and may reduce interaction with POU5F1/OCT4.

Its subcellular location is the cytoplasm. It is found in the nucleus. Its function is as follows. Transcription factor with a key role in the maintenance and self-renewal of embryonic and hematopoietic stem cells. In Mus musculus (Mouse), this protein is Sal-like protein 4 (Sall4).